Here is a 211-residue protein sequence, read N- to C-terminus: Claudin-7 (211 aa).

The Cytoplasmic segment spans residues methionine 1–glutamine 7. A helical transmembrane segment spans residues leucine 8–proline 28. The Extracellular portion of the chain corresponds to glutamine 29–arginine 81. The helical transmembrane segment at alanine 82 to methionine 102 threads the bilayer. At lysine 103–arginine 117 the chain is on the cytoplasmic side. Residues isoleucine 118–serine 138 traverse the membrane as a helical segment. Topologically, residues tryptophan 139 to glutamate 160 are extracellular. The helical transmembrane segment at phenylalanine 161–leucine 181 threads the bilayer. Over leucine 182 to valine 211 the chain is Cytoplasmic. Residues tyrosine 210 to valine 211 are interactions with TJP1, TJP2 and TJP3.

This sequence belongs to the claudin family. As to quaternary structure, directly interacts with TJP1/ZO-1, TJP2/ZO-2 and TJP3/ZO-3. The phosphorylated form interacts with EPCAM. Does not interact with CD81. In terms of processing, phosphorylated. As to expression, expressed in kidney, lung and prostate. Isoform 1 seems to be predominant, except in some normal prostate samples, where isoform 2 is the major form. Down-regulated in breast cancers, including ductal carcinoma in situ (DCIS), lobular carcinoma in situ (LCIS) and invasive ductal carcinoma (IDC) (at protein level), as well as in several cancer cell lines. Loss of expression correlates with histological grade, occurring predominantly in high-grade lesions.

Its subcellular location is the cell membrane. It is found in the basolateral cell membrane. The protein localises to the cell junction. It localises to the tight junction. Plays a major role in tight junction-specific obliteration of the intercellular space. The chain is Claudin-7 (CLDN7) from Homo sapiens (Human).